Reading from the N-terminus, the 192-residue chain is Probable protein adenylyltransferase y4lH (192 aa).

The Fido domain occupies 52–190 (LDFAHYRALH…LAPLAAEIRR (139 aa)). ATP contacts are provided by residues 82–83 (KG) and 139–141 (GNG).

The protein belongs to the fic family.

The enzyme catalyses L-tyrosyl-[protein] + ATP = O-(5'-adenylyl)-L-tyrosyl-[protein] + diphosphate. It carries out the reaction L-threonyl-[protein] + ATP = 3-O-(5'-adenylyl)-L-threonyl-[protein] + diphosphate. Functionally, probable adenylyltransferase that mediates the addition of adenosine 5'-monophosphate (AMP) to specific residues of target proteins. This chain is Probable protein adenylyltransferase y4lH, found in Sinorhizobium fredii (strain NBRC 101917 / NGR234).